Reading from the N-terminus, the 361-residue chain is Cyclin-D3-3 (361 aa).

Belongs to the cyclin family. Cyclin D subfamily.

Its function is as follows. Promotes divisions in the guard cells (GCs) after the guard mother cells (GMC) symmetric division. In Arabidopsis thaliana (Mouse-ear cress), this protein is Cyclin-D3-3 (CYCD3-3).